A 474-amino-acid polypeptide reads, in one-letter code: L-lactate permease (474 aa).

11 helical membrane passes run Ala-4–Phe-21, Ala-28–Ile-48, Phe-63–Gly-85, Leu-105–Ile-127, Ala-142–Thr-164, Leu-177–Leu-199, Gly-209–Tyr-231, Ser-238–Leu-255, Phe-281–Ala-303, Trp-324–Ser-346, and Ile-387–Leu-409.

The protein belongs to the lactate permease family.

Its subcellular location is the cell membrane. Plays a role in L-lactate utilization. This Streptococcus iniae (Streptococcus shiloi) protein is L-lactate permease (lctP).